A 335-amino-acid chain; its full sequence is Biotin synthase (335 aa).

A Radical SAM core domain is found at F47–R276. The [4Fe-4S] cluster site is built by C65, C69, and C72. [2Fe-2S] cluster-binding residues include C109, C141, C201, and R271.

It belongs to the radical SAM superfamily. Biotin synthase family. Homodimer. [4Fe-4S] cluster serves as cofactor. Requires [2Fe-2S] cluster as cofactor.

The catalysed reaction is (4R,5S)-dethiobiotin + (sulfur carrier)-SH + 2 reduced [2Fe-2S]-[ferredoxin] + 2 S-adenosyl-L-methionine = (sulfur carrier)-H + biotin + 2 5'-deoxyadenosine + 2 L-methionine + 2 oxidized [2Fe-2S]-[ferredoxin]. Its pathway is cofactor biosynthesis; biotin biosynthesis; biotin from 7,8-diaminononanoate: step 2/2. In terms of biological role, catalyzes the conversion of dethiobiotin (DTB) to biotin by the insertion of a sulfur atom into dethiobiotin via a radical-based mechanism. In Bacillus subtilis (strain 168), this protein is Biotin synthase.